The following is a 196-amino-acid chain: MSDLLNAAALDQLFRTARTQNAFLDTPVSEDLLRELYDLVKWGPTAANGSPARFVFVTTAEGKEKLKPALSEGNAAKTLAAPVTAIIGFDEDFHEKLPYLFPHADAKSWFDGPRTARTESAFRNSSLQGAYLILAARALGLDAGPMSGFDNAKVDAAFFAGTPIKSNFLVNLGYGDPAGLFPRLPRLSFDEAARIA.

This sequence belongs to the nitroreductase family. HadB/RutE subfamily. It depends on FMN as a cofactor.

In Xanthomonas campestris pv. campestris (strain B100), this protein is Putative NADH dehydrogenase/NAD(P)H nitroreductase xcc-b100_0585.